The sequence spans 906 residues: Glutamate receptor 1 (906 aa).

The signal sequence occupies residues 1–18 (MQHIFAFFCTGFLGAVVG). The Extracellular portion of the chain corresponds to 19–536 (ANFPNNIQIG…GVFSFLDPLA (518 aa)). Asn-63, Asn-249, Asn-257, Asn-363, Asn-401, and Asn-406 each carry an N-linked (GlcNAc...) asparagine glycan. Cys-75 and Cys-323 are oxidised to a cystine. Residues Pro-492, Thr-494, and Arg-499 each coordinate L-glutamate. The chain crosses the membrane as a helical span at residues 537–557 (YEIWMCIVFAYIGVSVVLFLV). The Cytoplasmic segment spans residues 558 to 584 (SRFSPYEWHSEEFEEGRDQTTSDQSNE). An intramembrane region (helical; Pore-forming) is located at residues 585–600 (FGIFNSLWFSLGAFMQ). The stretch at 601–603 (QGC) is an intramembrane region. A lipid anchor (S-palmitoyl cysteine) is attached at Cys-603. Topologically, residues 604 to 609 (DISPRS) are cytoplasmic. The helical transmembrane segment at 610–630 (LSGRIVGGVWWFFTLIIISSY) threads the bilayer. Over 631–805 (TANLAAFLTV…DKTSALSLSN (175 aa)) the chain is Extracellular. Ser-645 bears the Phosphoserine mark. L-glutamate-binding residues include Ser-668 and Thr-669. Residue Ser-710 is modified to Phosphoserine. Glu-719 is a binding site for L-glutamate. Cys-732 and Cys-787 are oxidised to a cystine. The helical transmembrane segment at 806 to 826 (VAGVFYILIGGLGLAMLVALI) threads the bilayer. Residues 827–906 (EFCYKSRSES…SGMPLGATGL (80 aa)) lie on the Cytoplasmic side of the membrane. Residue Cys-829 is the site of S-palmitoyl cysteine attachment. Residues Ser-849 and Ser-863 each carry the phosphoserine modification. Positions 861-880 (RNSGAGASSAGSGENGRVVS) are disordered. Low complexity predominate over residues 863–872 (SGAGASSAGS). Positions 903–906 (ATGL) match the PDZ-binding motif.

The protein belongs to the glutamate-gated ion channel (TC 1.A.10.1) family. GRIA1 subfamily. Homotetramer or heterotetramer of pore-forming glutamate receptor subunits; heteromeric assembly can be the result of both receptor subtype and flip-flop forms and according the composition, one partner can be dominant with respect to the fast desensitizing current component, whereas the other can determine the steady-state component. Tetramers may be formed by the dimerization of dimers. Found in a complex with GRIA2, GRIA3, GRIA4, CNIH2, CNIH3, CACNG2, CACNG3, CACNG4, CACNG5, CACNG7 and CACNG8. Interacts with HIP1 and RASGRF2. Interacts with SYNDIG1 and GRIA2. Interacts with DLG1 (via C-terminus). Interacts with LRFN1. Interacts with PRKG2. Interacts with CNIH2 and CACNG2. Interacts with CACNG5; this interaction modulates the gating. Interacts (via C-terminus) with PDLIM4 (via LIM domain); this interaction as well as the interaction of PDLIM4 with alpha-actinin is required for their colocalization in early endosomes. Interacts with SNX27 (via PDZ domain); the interaction is required for recycling to the plasma membrane when endocytosed and prevent degradation in lysosomes. Interacts (via PDZ-binding motif) with SHANK3 (via PDZ domain). Interacts with CACNG3; associates GRIA1 with the adapter protein complex 4 (AP-4) to target GRIA1 to the somatodendritic compartment of neurons. Interacts with CACNG2; this interaction mediates traffick to the plasma membrane and modulation of desensitization. Interaction with CNIH2 and CNIH3; this interaction promotes expression at the plasma membrane and extensively modulates their gating properties by slowing deactivation and desensitization kinetics. Found in a complex with GRIA2, GRIA3, GRIA4, DLG4, CACNG8 and CNIH2. Phosphorylated at Ser-645. Phosphorylated at Ser-710 by PKC. Phosphorylated at Ser-849 by PKC, PKA and CAMK2. Phosphorylated at Ser-863 by PKC, PKA and PRKG2. Phosphorylation of Ser-863 is reduced by induction of long-term depression and increased by induction of long-term potentiation. In terms of processing, palmitoylated. Depalmitoylated by CPT1C and upon L-glutamate stimulation. ZDHHC3/GODZ specifically palmitoylates Cys-603, which leads to Golgi retention and decreased cell surface expression. In contrast, Cys-829 palmitoylation does not affect cell surface expression but regulates stimulation-dependent endocytosis.

It localises to the cell membrane. Its subcellular location is the endoplasmic reticulum membrane. It is found in the postsynaptic cell membrane. The protein resides in the postsynaptic density membrane. The protein localises to the cell projection. It localises to the dendrite. Its subcellular location is the dendritic spine. It is found in the early endosome membrane. The protein resides in the recycling endosome membrane. The protein localises to the presynapse. It localises to the synapse. It catalyses the reaction Ca(2+)(in) = Ca(2+)(out). The catalysed reaction is Na(+)(in) = Na(+)(out). It carries out the reaction Mg(2+)(in) = Mg(2+)(out). The enzyme catalyses Li(+)(in) = Li(+)(out). It catalyses the reaction K(+)(in) = K(+)(out). The catalysed reaction is Sr(2+)(in) = Sr(2+)(out). Functionally, ionotropic glutamate receptor that functions as a ligand-gated cation channel, gated by L-glutamate and glutamatergic agonists such as alpha-amino-3-hydroxy-5-methyl-4-isoxazolepropionic acid (AMPA), quisqualic acid, and kainic acid. L-glutamate acts as an excitatory neurotransmitter at many synapses in the central nervous system. Binding of the excitatory neurotransmitter L-glutamate induces a conformation change, leading to the opening of the cation channel, and thereby converts the chemical signal to an electrical impulse upon entry of monovalent and divalent cations such as sodium and calcium. The receptor then desensitizes rapidly and enters in a transient inactive state, characterized by the presence of bound agonist. In the presence of CACNG2 or CACNG4 or CACNG7 or CACNG8, shows resensitization which is characterized by a delayed accumulation of current flux upon continued application of L-glutamate. Calcium (Ca(2+)) permeability depends on subunits composition and, heteromeric channels containing edited GRIA2 subunit are calcium-impermeable. Also permeable to other divalents cations such as strontium(2+) and magnesium(2+) and monovalent cations such as potassium(1+) and lithium(1+). This chain is Glutamate receptor 1, found in Macaca fascicularis (Crab-eating macaque).